Reading from the N-terminus, the 1034-residue chain is AP-3 complex subunit delta (1034 aa).

10 HEAT repeats span residues 35 to 72 (KYIS…LGYD), 143 to 180 (DLSR…RYPE), 181 to 217 (ALRP…KNPK), 219 to 255 (YLPL…LEPR), 258 to 297 (KKLI…GMPN), 299 to 337 (SASI…THPK), 338 to 374 (SVQA…KKNL), 376 to 414 (EIVK…LYVT), 415 to 452 (NFEW…RVPV), and 570 to 609 (NSAC…EIVQ). 4 disordered regions span residues 637-660 (DLDE…EHDK), 669-688 (QAGT…ELTP), 701-723 (EQSN…NADQ), and 758-1034 (QEQQ…KEIL). Position 683 is a phosphoserine (Ser683). A Phosphothreonine modification is found at Thr687. Positions 769 to 784 (GKKKHKKGKKSKKAKN) are enriched in basic residues. 2 stretches are compositionally biased toward basic and acidic residues: residues 822–836 (KDGK…RALD) and 882–906 (KDKD…RKEA). Residues 928–942 (SATSNNNNTSTVLPD) are compositionally biased toward low complexity. Residues 986–1003 (KVHKKKHKKEKSQRKEKK) show a composition bias toward basic residues. A compositionally biased stretch (low complexity) spans 1007–1016 (ESASVSAIVS). The span at 1025-1034 (GISTPSKEIL) shows a compositional bias: polar residues.

This sequence belongs to the adaptor complexes large subunit family. In terms of assembly, adaptor protein complex 3 (AP-3) is a heterotetramer composed of two large chains (delta and beta3), a medium chain (mu3) and a small chain (sigma3).

The protein resides in the cytoplasmic vesicle. It localises to the clathrin-coated vesicle membrane. The protein localises to the golgi apparatus. Its function is as follows. Part of the AP-3 complex, an adapter-related complex which is not clathrin-associated. The complex is associated with the Golgi region as well as more peripheral structures. It facilitates the budding of vesicles from the Golgi membrane and may be directly involved in trafficking to lysosomes. In terms of biological role, may be a coat protein involved in the formation of specialized structures like pigment granules. This chain is AP-3 complex subunit delta (g), found in Drosophila melanogaster (Fruit fly).